The primary structure comprises 143 residues: UPF0251 protein Rru_A1194 (143 aa).

The interval 100–143 (LDGSACPNRRQRRGPCARRGAAGALARQTGDEPPSSPTDNEKDD) is disordered. The segment covering 116-126 (ARRGAAGALAR) has biased composition (low complexity).

Belongs to the UPF0251 family.

The sequence is that of UPF0251 protein Rru_A1194 from Rhodospirillum rubrum (strain ATCC 11170 / ATH 1.1.1 / DSM 467 / LMG 4362 / NCIMB 8255 / S1).